The sequence spans 238 residues: Uridylate kinase (238 aa).

12–15 (KLSG) is a binding site for ATP. Position 54 (Gly54) interacts with UMP. The ATP site is built by Gly55 and Arg59. UMP is bound by residues Asp74 and 135–142 (TGNPYFTT). 3 residues coordinate ATP: Thr162, Tyr168, and Asp171.

It belongs to the UMP kinase family. In terms of assembly, homohexamer.

Its subcellular location is the cytoplasm. The enzyme catalyses UMP + ATP = UDP + ADP. It functions in the pathway pyrimidine metabolism; CTP biosynthesis via de novo pathway; UDP from UMP (UMPK route): step 1/1. Inhibited by UTP. Catalyzes the reversible phosphorylation of UMP to UDP. This Nitratidesulfovibrio vulgaris (strain ATCC 29579 / DSM 644 / CCUG 34227 / NCIMB 8303 / VKM B-1760 / Hildenborough) (Desulfovibrio vulgaris) protein is Uridylate kinase.